We begin with the raw amino-acid sequence, 127 residues long: UPF0251 protein Ccel_0627 (127 aa).

Belongs to the UPF0251 family.

The chain is UPF0251 protein Ccel_0627 from Ruminiclostridium cellulolyticum (strain ATCC 35319 / DSM 5812 / JCM 6584 / H10) (Clostridium cellulolyticum).